A 377-amino-acid chain; its full sequence is Rhodopsin, long-wavelength (377 aa).

The Extracellular portion of the chain corresponds to 1–51 (MIAVSGPSYEAFSYGGQARFNNQTVVDKVPPDMLHLIDANWYQYPPLNPMW). A glycan (N-linked (GlcNAc...) asparagine) is linked at Asn22. Residues 52–76 (HGILGFVIGMLGFVSAMGNGMVVYI) traverse the membrane as a helical segment. Over 77–88 (FLSTKSLRTPSN) the chain is Cytoplasmic. The chain crosses the membrane as a helical span at residues 89-113 (LFVINLAISNFLMMFCMSPPMVINC). Topologically, residues 114-128 (YYETWVLGPLFCQIY) are extracellular. Cys125 and Cys202 are oxidised to a cystine. The helical transmembrane segment at 129-148 (AMLGSLFGCGSIWTMTMIAF) threads the bilayer. Residues 149–167 (DRYNVIVKGLSGKPLSING) are Cytoplasmic-facing. Residues 168 to 191 (ALIRIIAIWLFSLGWTIAPMFGWN) traverse the membrane as a helical segment. The Extracellular segment spans residues 192–215 (RYVPEGNMTACGTDYFNRGLLSAS). The N-linked (GlcNAc...) asparagine glycan is linked to Asn198. Residues 216–243 (YLVCYGIWVYFVPLFLIIYSYWFIIQAV) traverse the membrane as a helical segment. Residues 244-278 (AAHEKNMREQAKKMNVASLRSSENQNTSAECKLAK) lie on the Cytoplasmic side of the membrane. The helical transmembrane segment at 279–302 (VALMTISLWFMAWTPYLVINFSGI) threads the bilayer. The Extracellular portion of the chain corresponds to 303–309 (FNLVKIS). A helical membrane pass occupies residues 310–334 (PLFTIWGSLFAKANAVYNPIVYGIS). Lys321 carries the N6-(retinylidene)lysine modification. Topologically, residues 335-377 (HPKYRAALFAKFPSLACAAEPSSDAVSTTSGTTTVTDNEKSNA) are cytoplasmic. Residues 357-370 (SDAVSTTSGTTTVT) are compositionally biased toward low complexity. Residues 357–377 (SDAVSTTSGTTTVTDNEKSNA) form a disordered region.

This sequence belongs to the G-protein coupled receptor 1 family. Opsin subfamily. In terms of processing, phosphorylated on some or all of the serine and threonine residues present in the C-terminal region.

The protein localises to the membrane. Its function is as follows. Visual pigments are the light-absorbing molecules that mediate vision. They consist of an apoprotein, opsin, covalently linked to 11-cis-retinal. This chain is Rhodopsin, long-wavelength, found in Apis mellifera (Honeybee).